Consider the following 354-residue polypeptide: Uroporphyrinogen decarboxylase (354 aa).

Substrate contacts are provided by residues 27–31 (RQAGR), Asp77, Tyr154, Ser209, and His327.

This sequence belongs to the uroporphyrinogen decarboxylase family. In terms of assembly, homodimer.

The protein localises to the cytoplasm. It catalyses the reaction uroporphyrinogen III + 4 H(+) = coproporphyrinogen III + 4 CO2. It participates in porphyrin-containing compound metabolism; protoporphyrin-IX biosynthesis; coproporphyrinogen-III from 5-aminolevulinate: step 4/4. In terms of biological role, catalyzes the decarboxylation of four acetate groups of uroporphyrinogen-III to yield coproporphyrinogen-III. This is Uroporphyrinogen decarboxylase from Shewanella loihica (strain ATCC BAA-1088 / PV-4).